A 223-amino-acid chain; its full sequence is RNA pyrophosphohydrolase (223 aa).

The Nudix hydrolase domain occupies 6–149; it reads GFRPNVGIIL…KRGVYEMALT (144 aa). A Nudix box motif is present at residues 38–59; that stretch reads GGIDRGESPEQAMFRELHEEVG. The segment at 175 to 223 is disordered; sequence ERHMPDGGAPAGLDLPPGGSFDPHPDITSASDDPSPPPHNKAPFLPSQR. Low complexity predominate over residues 180–193; the sequence is DGGAPAGLDLPPGG.

Belongs to the Nudix hydrolase family. RppH subfamily. The cofactor is a divalent metal cation.

Accelerates the degradation of transcripts by removing pyrophosphate from the 5'-end of triphosphorylated RNA, leading to a more labile monophosphorylated state that can stimulate subsequent ribonuclease cleavage. The chain is RNA pyrophosphohydrolase from Variovorax paradoxus (strain S110).